Reading from the N-terminus, the 427-residue chain is Tumor necrosis factor receptor superfamily member 16 (427 aa).

The N-terminal stretch at 1–28 is a signal peptide; the sequence is MGAGATGRAMDGPRLLLLLLLGVSLGGA. Residues 29 to 250 lie on the Extracellular side of the membrane; sequence KEACPTGLYT…PVVTRGTTDN (222 aa). 4 TNFR-Cys repeats span residues 31–64, 66–107, 108–146, and 148–188; these read ACPT…QTVC, PCLD…DAVC, RCAY…NTVC, and ECPD…DAEC. Intrachain disulfides connect cysteine 32–cysteine 43, cysteine 44–cysteine 57, cysteine 47–cysteine 64, cysteine 67–cysteine 83, cysteine 86–cysteine 99, cysteine 89–cysteine 107, cysteine 109–cysteine 122, cysteine 125–cysteine 138, cysteine 128–cysteine 146, cysteine 149–cysteine 164, cysteine 167–cysteine 180, and cysteine 170–cysteine 188. Residue asparagine 60 is glycosylated (N-linked (GlcNAc...) asparagine). Positions 194-219 are disordered; the sequence is RWITRSTPPEGSDSTAPSTQEPEAPP. Polar residues predominate over residues 197–214; it reads TRSTPPEGSDSTAPSTQE. Residues 251–272 form a helical membrane-spanning segment; that stretch reads LIPVYCSILAAVVVGLVAYIAF. The Cytoplasmic portion of the chain corresponds to 273–427; that stretch reads KRWNSCKQNK…CSESTATSPV (155 aa). Composition is skewed to polar residues over residues 281-291 and 305-326; these read NKQGANSRPVN and SGIS…TASG. The tract at residues 281–338 is disordered; the sequence is NKQGANSRPVNQTPPPEGEKLHSDSGISVDSQSLHDQQPHTQTASGQALKGDGGLYSS. Serine 311 is subject to Phosphoserine. Residues 326-341 are mediates interaction with KIDINS220; that stretch reads GQALKGDGGLYSSLPP. The Death domain maps to 344-421; it reads REEVEKLLNG…DLVESLCSES (78 aa).

As to quaternary structure, homodimer; disulfide-linked. Heterodimer with SORCS2. The extracellular domains of the heterodimer bind NGF. The cytoplasmic region of the heterodimer binds TRIO. NGF binding mediates dissociation of TRIO from the receptor complex. Interacts with RTN4R. Interacts with TRAF2, TRAF4, TRAF6, PTPN13 and RANBP9. Interacts through TRAF6 with SQSTM1 which bridges NGFR to NTRK1. Interacts with BEX1. Interacts with BEX3. Interacts with KIDINS220 and NTRK1. Can form a ternary complex with NTRK1 and KIDINS220 and this complex is affected by the expression levels of KIDINS220. An increase in KIDINS220 expression leads to a decreased association of NGFR and NTRK1. Interacts with NTRK2; may regulate the ligand specificity of the NTRK2 receptor. Interacts (via death domain) with RAB31. Interacts with LINGO1. Interacts with NRADD. Interacts with MAGED1; the interaction antagonizes the association NGFR:NTRK1. Interacts (via death domain) with ARHGDIA and RIPK2. Interacts with BFAR. Post-translationally, N- and O-glycosylated. O-linked glycans consist of Gal(1-3)GalNAc core elongated by 1 or 2 NeuNAc. In terms of processing, phosphorylated on serine residues.

The protein localises to the cell membrane. The protein resides in the cytoplasm. It localises to the perikaryon. It is found in the cell projection. Its subcellular location is the growth cone. The protein localises to the dendritic spine. Functionally, low affinity receptor which can bind to NGF, BDNF, NTF3, and NTF4. Forms a heterodimeric receptor with SORCS2 that binds the precursor forms of NGF, BDNF and NTF3 with high affinity, and has much lower affinity for mature NGF and BDNF. Plays an important role in differentiation and survival of specific neuronal populations during development. Can mediate cell survival as well as cell death of neural cells. Plays a role in the inactivation of RHOA. Plays a role in the regulation of the translocation of GLUT4 to the cell surface in adipocytes and skeletal muscle cells in response to insulin, probably by regulating RAB31 activity, and thereby contributes to the regulation of insulin-dependent glucose uptake. Necessary for the circadian oscillation of the clock genes BMAL1, PER1, PER2 and NR1D1 in the suprachiasmatic nucleus (SCmgetaN) of the brain and in liver and of the genes involved in glucose and lipid metabolism in the liver. Together with BFAR negatively regulates NF-kappa-B and JNK-related signaling pathways. This is Tumor necrosis factor receptor superfamily member 16 (NGFR) from Homo sapiens (Human).